Reading from the N-terminus, the 52-residue chain is UPF0391 membrane protein Avin_10980 (52 aa).

2 helical membrane-spanning segments follow: residues 4–24 (WSIIFLVVAIIAGLLGFGGIA) and 29–49 (GIAKILFALFLILFVVSLLFG).

Belongs to the UPF0391 family.

Its subcellular location is the cell membrane. In Azotobacter vinelandii (strain DJ / ATCC BAA-1303), this protein is UPF0391 membrane protein Avin_10980.